Here is a 270-residue protein sequence, read N- to C-terminus: Nuclease PA3 (270 aa).

A divalent metal cation-binding residues include Trp1, His6, His15, Asp45, and His60. Residue 1–6 coordinates substrate; that stretch reads WGALGH. Residues 45-51, 60-63, and 73-78 each bind substrate; these read DEYRLTS, HFID, and NVDYER. Intrachain disulfides connect Cys72–Cys217 and Cys80–Cys85. Position 92 (Asn92) interacts with substrate. Asn92 carries N-linked (GlcNAc...) asparagine glycosylation. A divalent metal cation is bound by residues His116, Asp120, and His126. The tract at residues 116-164 is substrate binding; the sequence is HFIGDMTQPLHDEAYAVGGNKINVTFDGYHDNLHSDWDTYMPQKLIGGH. A glycan (N-linked (GlcNAc...) asparagine) is linked at Asn138. Residues His149 and Asp153 each coordinate a divalent metal cation. N-linked (GlcNAc...) asparagine glycans are attached at residues Asn184 and Asn197.

It belongs to the nuclease type I family. Zn(2+) serves as cofactor.

The protein localises to the secreted. It catalyses the reaction a ribonucleoside 3'-phosphate + H2O = a ribonucleoside + phosphate. Hydrolyzes only single-stranded DNA and RNA without apparent specificity for bases. The chain is Nuclease PA3 from Penicillium sp.